The chain runs to 406 residues: Calreticulin (406 aa).

Positions 1-17 (MMWCKTVIVLLATVGFI) are cleaved as a signal peptide. A disulfide bridge links C105 with C137. An alpha-D-glucoside-binding residues include Y109, K111, Y128, and D135. 7 consecutive repeat copies span residues 191-202 (VESGNLEDDWDF), 210-221 (DPTATKPEDWDD), 227-238 (DPDDKKPEDWDK), 244-255 (DPDATKPEDWDD), 259-269 (GEWEPPMIDNP), 273-283 (GEWQPKQLDNP), and 287-297 (GAWEHPEIANP). The 4 X approximate repeats stretch occupies residues 191-255 (VESGNLEDDW…DATKPEDWDD (65 aa)). The span at 207–251 (KIKDPTATKPEDWDDRATIPDPDDKKPEDWDKPEHIPDPDATKPE) shows a compositional bias: basic and acidic residues. The interval 207 to 259 (KIKDPTATKPEDWDDRATIPDPDDKKPEDWDKPEHIPDPDATKPEDWDDEMDG) is disordered. Residues 259–297 (GEWEPPMIDNPEFKGEWQPKQLDNPNYKGAWEHPEIANP) form a 3 X approximate repeats region. D317 provides a ligand contact to an alpha-D-glucoside. The disordered stretch occupies residues 347–406 (KNTQAGEKKMKEAQDEVQRKKDEEEAKKASDKDDEDEDDDDEEKDDESKQDKDQSEHDEL). Over residues 352–377 (GEKKMKEAQDEVQRKKDEEEAKKASD) the composition is skewed to basic and acidic residues. The segment covering 378 to 391 (KDDEDEDDDDEEKD) has biased composition (acidic residues). Residues 392–406 (DESKQDKDQSEHDEL) show a composition bias toward basic and acidic residues.

It belongs to the calreticulin family.

The protein localises to the endoplasmic reticulum lumen. In terms of biological role, molecular calcium-binding chaperone promoting folding, oligomeric assembly and quality control in the ER via the calreticulin/calnexin cycle. This lectin may interact transiently with almost all of the monoglucosylated glycoproteins that are synthesized in the ER. The chain is Calreticulin from Drosophila melanogaster (Fruit fly).